We begin with the raw amino-acid sequence, 1121 residues long: Brassinosteroid LRR receptor kinase BRI1 (1121 aa).

The signal sequence occupies residues 1–24 (MDSLWAAIAALFVAAAVVVRGAAA). Residues 54-61 (CRFPGAGC) carry the Cys pair 1 motif. LRR repeat units lie at residues 90–114 (LGSVEVLSLRGANVSGALSAAGGAR), 116–142 (GSKLQALDLSGNAALRGSVADVAALAS), 144–167 (CGGLKTLNLSGDAVGAAKVGGGGG), 170–193 (FAGLDSLDLSNNKITDDSDLRWMV), 197–221 (VGAVRWLDLALNRISGVPEFTNCSG), 223–243 (QYLDLSGNLIVGEVPGGALSD), 244–268 (CRGLKVLNLSFNHLAGVFPPDIAGL), 269–292 (TSLNALNLSNNNFSGELPGEAFAK), 294–317 (QQLTALSLSFNHFNGSIPDTVASL), 318–341 (PELQQLDLSSNTFSGTIPSSLCQD), 343–367 (NSKLHLLYLQNNYLTGGIPDAVSNC), 369–391 (SLVSLDLSLNYINGSIPASLGDL), 392–415 (GNLQDLILWQNELEGEIPASLSRI), 416–439 (QGLEHLILDYNGLTGSIPPELAKC), 441–463 (KLNWISLASNRLSGPIPSWLGKL), 464–487 (SYLAILKLSNNSFSGPIPPELGDC), and 489–511 (SLVWLDLNSNQLNGSIPKELAKQ). Asn102 carries an N-linked (GlcNAc...) asparagine glycan. Asn151 carries N-linked (GlcNAc...) asparagine glycosylation. Asn218 carries N-linked (GlcNAc...) asparagine glycosylation. 4 N-linked (GlcNAc...) asparagine glycosylation sites follow: Asn251, Asn275, Asn280, and Asn307. 2 N-linked (GlcNAc...) asparagine glycosylation sites follow: Asn366 and Asn381. N-linked (GlcNAc...) asparagine glycans are attached at residues Asn473 and Asn501. Tyr525 lines the brassinolide pocket. One copy of the LRR 18 repeat lies at 541–564 (GSLLEFTSIRPDDLSRMPSKKLCN). An N-linked (GlcNAc...) asparagine glycan is attached at Asn564. Tyr569 contributes to the brassinolide binding site. A glycan (N-linked (GlcNAc...) asparagine) is linked at Asn580. 4 LRR repeats span residues 580–603 (NGSMIFLDLSYNQLDSAIPGELGD), 604–628 (MFYLMIMNLGHNLLSGTIPSRLAEA), 629–651 (KKLAVLDLSYNQLEGPIPNSFSA), and 652–676 (LSLSEINLSNNQLNGTIPELGSLAT). Asn658, Asn665, and Asn684 each carry an N-linked (GlcNAc...) asparagine glycan. The Cys pair 2 signature appears at 689 to 696 (CGFPLPPC). The interval 693-712 (LPPCDHSSPRSSNDHQSHRR) is disordered. The helical transmembrane segment at 719–739 (SIAMGLLFSLFCIIVIIIAIG) threads the bilayer. Residues 807-1083 (FHIACQIGSG…LKVMAMFKEI (277 aa)) form the Protein kinase domain. ATP is bound by residues 813–821 (IGSGGFGDV), Lys835, 881–883 (DYM), 887–890 (SLED), 933–938 (DMKSSN), and Asp951. Asp933 functions as the Proton acceptor in the catalytic mechanism.

Belongs to the protein kinase superfamily. Ser/Thr protein kinase family. In terms of assembly, interacts with BIP103 and BIP131. Interacts with BAK1. Interacts with BSK3. Interacts with SERK2. Highly expressed in shoots. Expressed at low levels in roots.

It localises to the cell membrane. The catalysed reaction is L-seryl-[protein] + ATP = O-phospho-L-seryl-[protein] + ADP + H(+). It catalyses the reaction L-threonyl-[protein] + ATP = O-phospho-L-threonyl-[protein] + ADP + H(+). Functionally, receptor kinase involved brassinosteroid (BR) signal transduction. Regulates, in response to BR binding, a signaling cascade involved in plant development, promotion of cell elongation and flowering. Activates BR signaling by targeting and phosphorylating BSK3, a positive regulator of BR signaling. Forms at the plasma membrane a receptor complex with BAK1 which is activated in response to brassinolide. Phosphorylates BAK1. Phosphorylates REM4.1, which reduces REM4.1 binding affinity to BAK1 and allows the formation and subsequent activation of the BRI1-BAK1 receptor complex. Functions in various growth and developmental processes, such as internode elongation, bending of the lamina joint and skotomorphogenesis. Functions in internode elongation by inducing the formation of the intercalary meristem and the longitudinal elongation of internode cells. Involved in organ development through the control of cell division and elongation. Does not seem essential for organ pattern formation or organ initiation. In Oryza sativa subsp. japonica (Rice), this protein is Brassinosteroid LRR receptor kinase BRI1.